The sequence spans 681 residues: Translation factor GUF1 homolog, chloroplastic (681 aa).

A chloroplast-targeting transit peptide spans 1 to 51; that stretch reads MAMASAMDLSSPPTFFLSGTSTSSPSLRRLSSISVSGFRRHSNRKLQILCQ. One can recognise a tr-type G domain in the interval 84–265; the sequence is SNIRNFSIIA…AIVQRIPAPL (182 aa). GTP contacts are provided by residues 93–100, 158–162, and 212–215; these read AHIDHGKS, DTPGH, and NKID.

Belongs to the TRAFAC class translation factor GTPase superfamily. Classic translation factor GTPase family. LepA subfamily.

Its subcellular location is the plastid. The protein localises to the chloroplast. It catalyses the reaction GTP + H2O = GDP + phosphate + H(+). Functionally, promotes chloroplast protein synthesis. May act as a fidelity factor of the translation reaction, by catalyzing a one-codon backward translocation of tRNAs on improperly translocated ribosomes. The sequence is that of Translation factor GUF1 homolog, chloroplastic from Arabidopsis thaliana (Mouse-ear cress).